The sequence spans 340 residues: Phosphoribosylformylglycinamidine cyclo-ligase (340 aa).

This sequence belongs to the AIR synthase family.

It is found in the cytoplasm. It catalyses the reaction 2-formamido-N(1)-(5-O-phospho-beta-D-ribosyl)acetamidine + ATP = 5-amino-1-(5-phospho-beta-D-ribosyl)imidazole + ADP + phosphate + H(+). It functions in the pathway purine metabolism; IMP biosynthesis via de novo pathway; 5-amino-1-(5-phospho-D-ribosyl)imidazole from N(2)-formyl-N(1)-(5-phospho-D-ribosyl)glycinamide: step 2/2. This is Phosphoribosylformylglycinamidine cyclo-ligase from Crocosphaera subtropica (strain ATCC 51142 / BH68) (Cyanothece sp. (strain ATCC 51142)).